A 235-amino-acid chain; its full sequence is Large ribosomal subunit protein uL1 (235 aa).

The protein belongs to the universal ribosomal protein uL1 family. Part of the 50S ribosomal subunit.

In terms of biological role, binds directly to 23S rRNA. The L1 stalk is quite mobile in the ribosome, and is involved in E site tRNA release. Functionally, protein L1 is also a translational repressor protein, it controls the translation of the L11 operon by binding to its mRNA. The protein is Large ribosomal subunit protein uL1 of Desulfotalea psychrophila (strain LSv54 / DSM 12343).